Consider the following 517-residue polypeptide: Aldehyde dehydrogenase, mitochondrial (517 aa).

The N-terminal 17 residues, 1-17, are a transit peptide targeting the mitochondrion; the sequence is MLRAAARFGPRLGRRLL. Residues 9 to 24 carry the SIFI-degron motif; that stretch reads GPRLGRRLLSAAATQA. Lysine 52, lysine 73, lysine 78, and lysine 159 each carry N6-acetyllysine. NAD(+) is bound at residue 262-267; sequence GSTEIG. Glutamate 285 acts as the Proton acceptor in catalysis. Cysteine 319 acts as the Nucleophile in catalysis. N6-acetyllysine occurs at positions 368, 383, 426, 428, and 451.

This sequence belongs to the aldehyde dehydrogenase family. As to quaternary structure, homotetramer. In response to mitochondrial stress, the precursor protein is ubiquitinated by the SIFI complex in the cytoplasm before mitochondrial import, leading to its degradation. Within the SIFI complex, UBR4 initiates ubiquitin chain that are further elongated or branched by KCMF1.

It is found in the mitochondrion matrix. It carries out the reaction an aldehyde + NAD(+) + H2O = a carboxylate + NADH + 2 H(+). It functions in the pathway alcohol metabolism; ethanol degradation; acetate from ethanol: step 2/2. Functionally, required for clearance of cellular formaldehyde, a cytotoxic and carcinogenic metabolite that induces DNA damage. The polypeptide is Aldehyde dehydrogenase, mitochondrial (ALDH2) (Homo sapiens (Human)).